Reading from the N-terminus, the 285-residue chain is Polyamine aminopropyltransferase (285 aa).

The PABS domain occupies 5–241 (QDWFTESYPD…GWWSATMAGK (237 aa)). S-methyl-5'-thioadenosine is bound at residue Gln-35. Residues His-66 and Asp-90 each coordinate spermidine. S-methyl-5'-thioadenosine-binding positions include Asp-110 and 141 to 142 (DG). The active-site Proton acceptor is the Asp-160. 160–163 (DSTD) provides a ligand contact to spermidine. An S-methyl-5'-thioadenosine-binding site is contributed by Pro-167.

This sequence belongs to the spermidine/spermine synthase family. As to quaternary structure, homodimer or homotetramer.

The protein resides in the cytoplasm. It carries out the reaction S-adenosyl 3-(methylsulfanyl)propylamine + putrescine = S-methyl-5'-thioadenosine + spermidine + H(+). Its pathway is amine and polyamine biosynthesis; spermidine biosynthesis; spermidine from putrescine: step 1/1. Its function is as follows. Catalyzes the irreversible transfer of a propylamine group from the amino donor S-adenosylmethioninamine (decarboxy-AdoMet) to putrescine (1,4-diaminobutane) to yield spermidine. The protein is Polyamine aminopropyltransferase of Methylococcus capsulatus (strain ATCC 33009 / NCIMB 11132 / Bath).